The following is a 181-amino-acid chain: ADP-ribosylation factor-like protein 1 (181 aa).

G2 is lipidated: N-myristoyl glycine. GTP-binding positions include 24 to 31, 45 to 48, G70, 126 to 129, and 160 to 161; these read GLDGAGKT, TIPT, NKQD, and AT. Mg(2+) contacts are provided by T31 and T48.

It belongs to the small GTPase superfamily. Arf family. The GTP-bound form interacts with GOLGA1. The GTP-bound form interacts with GOLGA4 and RGPD8. The GTP-bound form directly interacts with ARFIP2. Binds to SCOC, preferentially in its GTP-bound form. May interact with UNC119. Interacts with ARFIP1; this interaction directs ARFIP1 to the trans-Golgi membranes. Interacts with ARFGEF1 (via N-terminus). As to expression, detected in heart, liver, lung and liver (at protein level). Detected in fetal heart, lung, liver and kidney. Detected in adult heart, placenta, lung, liver, skeletal muscle, kidney and pancreas.

The protein resides in the golgi apparatus membrane. It is found in the golgi apparatus. Its subcellular location is the trans-Golgi network membrane. The protein localises to the membrane. Functionally, GTP-binding protein that recruits several effectors, such as golgins, arfaptins and Arf-GEFs to the trans-Golgi network, and modulates their functions at the Golgi complex. Plays thereby a role in a wide range of fundamental cellular processes, including cell polarity, innate immunity, or protein secretion mediated by arfaptins, which were shown to play a role in maintaining insulin secretion from pancreatic beta cells. The chain is ADP-ribosylation factor-like protein 1 (ARL1) from Homo sapiens (Human).